A 201-amino-acid chain; its full sequence is 3-isopropylmalate dehydratase small subunit (201 aa).

It belongs to the LeuD family. LeuD type 1 subfamily. In terms of assembly, heterodimer of LeuC and LeuD.

It catalyses the reaction (2R,3S)-3-isopropylmalate = (2S)-2-isopropylmalate. Its pathway is amino-acid biosynthesis; L-leucine biosynthesis; L-leucine from 3-methyl-2-oxobutanoate: step 2/4. In terms of biological role, catalyzes the isomerization between 2-isopropylmalate and 3-isopropylmalate, via the formation of 2-isopropylmaleate. In Pasteurella multocida (strain Pm70), this protein is 3-isopropylmalate dehydratase small subunit.